A 144-amino-acid chain; its full sequence is MLTPKRVKHRKQHRPSLAGKANKGNTITYGDYGLQALEPAWITNRQIEAARIAINRYVKRGGKLWIKIFPDRPLTVKPAETRMGKGKGSPEHWVAVVKPGRVMFELSGVSEEVAREAMRLAAHKLPVKCKFLKREEMGGEVSES.

A compositionally biased stretch (basic residues) spans 1-14 (MLTPKRVKHRKQHR). Positions 1–22 (MLTPKRVKHRKQHRPSLAGKAN) are disordered.

The protein belongs to the universal ribosomal protein uL16 family. In terms of assembly, part of the 50S ribosomal subunit.

In terms of biological role, binds 23S rRNA and is also seen to make contacts with the A and possibly P site tRNAs. This chain is Large ribosomal subunit protein uL16, found in Syntrophomonas wolfei subsp. wolfei (strain DSM 2245B / Goettingen).